The following is a 401-amino-acid chain: Argininosuccinate synthase (401 aa).

ATP is bound by residues 9 to 17 and alanine 35; that span reads AFSGGLDTS. Residues tyrosine 88 and serine 93 each contribute to the L-citrulline site. Glycine 117 contacts ATP. Residues threonine 119, asparagine 123, and aspartate 124 each contribute to the L-aspartate site. Asparagine 123 contacts L-citrulline. The L-citrulline site is built by arginine 127 and tyrosine 273.

The protein belongs to the argininosuccinate synthase family. Type 1 subfamily. Homotetramer.

It localises to the cytoplasm. The enzyme catalyses L-citrulline + L-aspartate + ATP = 2-(N(omega)-L-arginino)succinate + AMP + diphosphate + H(+). It functions in the pathway amino-acid biosynthesis; L-arginine biosynthesis; L-arginine from L-ornithine and carbamoyl phosphate: step 2/3. In Xylella fastidiosa (strain Temecula1 / ATCC 700964), this protein is Argininosuccinate synthase.